The sequence spans 81 residues: Photosystem I iron-sulfur center (81 aa).

4Fe-4S ferredoxin-type domains lie at 2–31 and 39–68; these read SHSV…MIPW and IASA…VRVY. Positions 11, 14, 17, 21, 48, 51, 54, and 58 each coordinate [4Fe-4S] cluster.

As to quaternary structure, the eukaryotic PSI reaction center is composed of at least 11 subunits. Requires [4Fe-4S] cluster as cofactor.

It is found in the plastid thylakoid membrane. It carries out the reaction reduced [plastocyanin] + hnu + oxidized [2Fe-2S]-[ferredoxin] = oxidized [plastocyanin] + reduced [2Fe-2S]-[ferredoxin]. Functionally, apoprotein for the two 4Fe-4S centers FA and FB of photosystem I (PSI); essential for photochemical activity. FB is the terminal electron acceptor of PSI, donating electrons to ferredoxin. The C-terminus interacts with PsaA/B/D and helps assemble the protein into the PSI complex. Required for binding of PsaD and PsaE to PSI. PSI is a plastocyanin-ferredoxin oxidoreductase, converting photonic excitation into a charge separation, which transfers an electron from the donor P700 chlorophyll pair to the spectroscopically characterized acceptors A0, A1, FX, FA and FB in turn. This chain is Photosystem I iron-sulfur center, found in Cuscuta gronovii (Common dodder).